The primary structure comprises 50 residues: Large ribosomal subunit protein bL32A (50 aa).

The span at 1 to 19 (MAVPKRRKSRSNTRHRRSQ) shows a compositional bias: basic residues. The tract at residues 1-21 (MAVPKRRKSRSNTRHRRSQWK) is disordered.

The protein belongs to the bacterial ribosomal protein bL32 family.

This chain is Large ribosomal subunit protein bL32A, found in Saccharopolyspora erythraea (strain ATCC 11635 / DSM 40517 / JCM 4748 / NBRC 13426 / NCIMB 8594 / NRRL 2338).